A 138-amino-acid chain; its full sequence is Large ribosomal subunit protein uL16 (138 aa).

The protein belongs to the universal ribosomal protein uL16 family. As to quaternary structure, part of the 50S ribosomal subunit.

In terms of biological role, binds 23S rRNA and is also seen to make contacts with the A and possibly P site tRNAs. This is Large ribosomal subunit protein uL16 from Syntrophobacter fumaroxidans (strain DSM 10017 / MPOB).